A 394-amino-acid chain; its full sequence is MNLHEYQAKQLFEHYGLPVKNGAVCQSVDEVDLVLAQLSGDKWAAKCQVHAGGRGKAGGVKLVQDVEEARSFAEKWLGQRLVTFQTDKLGQPVNQIYFEETCDIDKEFYLSAVVDRASQKVVFIASPAGGMDIEEVAQNTPHLLHKVEIDPLFGGLPYQGRELAFKLGLSDAQNKQFTDIFMGLSRLFLEKDLSLVEVNPLVLTQQGNLVCLDAKIAVDDNALFRHKDLSALQDLTQNDAREAEAEKFQLNYVALEGDIGCMVNGAGLAMGTMDIVKLYGGKPANFLDVGGGATKERVAEAFKIILTDPSVKVILVNIFGGIVRCDLIAEGVIAAVNEVGVRVPVVVRLEGTNAEIGRQILAESDVNILTAQSLQQATELAVNAAKENSNGDFN.

Residues Lys46, 53–55, Glu99, Cys102, and Glu107 contribute to the ATP site; that span reads GRG. 2 residues coordinate Mg(2+): Asn199 and Asp213. Substrate-binding positions include Asn264 and 321–323; that span reads GIV.

Belongs to the succinate/malate CoA ligase beta subunit family. In terms of assembly, heterotetramer of two alpha and two beta subunits. Mg(2+) is required as a cofactor.

The enzyme catalyses succinate + ATP + CoA = succinyl-CoA + ADP + phosphate. It carries out the reaction GTP + succinate + CoA = succinyl-CoA + GDP + phosphate. Its pathway is carbohydrate metabolism; tricarboxylic acid cycle; succinate from succinyl-CoA (ligase route): step 1/1. Its function is as follows. Succinyl-CoA synthetase functions in the citric acid cycle (TCA), coupling the hydrolysis of succinyl-CoA to the synthesis of either ATP or GTP and thus represents the only step of substrate-level phosphorylation in the TCA. The beta subunit provides nucleotide specificity of the enzyme and binds the substrate succinate, while the binding sites for coenzyme A and phosphate are found in the alpha subunit. This chain is Succinate--CoA ligase [ADP-forming] subunit beta, found in Haemophilus influenzae (strain PittGG).